Reading from the N-terminus, the 549-residue chain is Chaperonin GroEL 1 (549 aa).

ATP-binding positions include 30–33 (TLGP), Lys-51, 87–91 (DGTTT), Gly-415, 479–481 (NAA), and Asp-495.

Belongs to the chaperonin (HSP60) family. Forms a cylinder of 14 subunits composed of two heptameric rings stacked back-to-back. Interacts with the co-chaperonin GroES.

The protein localises to the cytoplasm. It carries out the reaction ATP + H2O + a folded polypeptide = ADP + phosphate + an unfolded polypeptide.. In terms of biological role, together with its co-chaperonin GroES, plays an essential role in assisting protein folding. The GroEL-GroES system forms a nano-cage that allows encapsulation of the non-native substrate proteins and provides a physical environment optimized to promote and accelerate protein folding. In Azoarcus sp. (strain BH72), this protein is Chaperonin GroEL 1.